The chain runs to 84 residues: Magnetosome protein MamR (84 aa).

This sequence belongs to the magnetosome MamR family.

It localises to the magnetosome. Its function is as follows. May play a role in controlling magnetite number and size. Coexpression of mamLQRBIEMO in a deletion of the 17 gene mamAB operon restores magnetosome vesicle formation but not magnetite biosynthesis. The chain is Magnetosome protein MamR from Magnetospirillum gryphiswaldense (strain DSM 6361 / JCM 21280 / NBRC 15271 / MSR-1).